Reading from the N-terminus, the 378-residue chain is 1-acyl-sn-glycerol-3-phosphate acyltransferase delta (378 aa).

Residues 11 to 31 (FLCHLVFCYVFIASGLIVNAI) form a helical membrane-spanning segment. An HXXXXD motif motif is present at residues 96–101 (HKFEID). The next 3 membrane-spanning stretches (helical) occupy residues 125–145 (ELAY…IFCT), 311–331 (WLFW…SMVS), and 338–358 (LASL…MIGV).

Belongs to the 1-acyl-sn-glycerol-3-phosphate acyltransferase family. Expressed at a high levels in the brain, at intermediate or low levels in skeletal muscles, gut, kidney, spleen and lung. Barely detectable in heart and liver.

It localises to the endoplasmic reticulum membrane. It catalyses the reaction a 1-acyl-sn-glycero-3-phosphate + an acyl-CoA = a 1,2-diacyl-sn-glycero-3-phosphate + CoA. It carries out the reaction (4Z,7Z,10Z,13Z,16Z,19Z)-docosahexaenoyl-CoA + 1-hexadecanoyl-sn-glycero-3-phosphate = 1-hexadecanoyl-2-(4Z,7Z,10Z,13Z,16Z,19Z-docosahexaenoyl)-sn-glycero-3-phosphate + CoA. The catalysed reaction is 1-octadecanoyl-sn-glycero-3-phosphate + (9Z,12Z)-octadecadienoyl-CoA = 1-octadecanoyl-2-(9Z,12Z-octadecadienoyl)-sn-glycero-3-phosphate + CoA. The enzyme catalyses 1-octadecanoyl-sn-glycero-3-phosphate + (4Z,7Z,10Z,13Z,16Z,19Z)-docosahexaenoyl-CoA = 1-octadecanoyl-2-(4Z,7Z,10Z,13Z,16Z,19Z-docosahexaenoyl)-sn-glycero-3-phosphate + CoA. It catalyses the reaction (4Z,7Z,10Z,13Z,16Z,19Z)-docosahexaenoyl-CoA + 1-(9Z-octadecenoyl)-sn-glycero-3-phosphate = 1-(9Z-octadecenoyl)-2-(4Z,7Z,10Z,13Z,16Z,19Z-docosahexaenoyl)-sn-glycero-3-phosphate + CoA. Its pathway is phospholipid metabolism; CDP-diacylglycerol biosynthesis; CDP-diacylglycerol from sn-glycerol 3-phosphate: step 2/3. Converts 1-acyl-sn-glycerol-3-phosphate (lysophosphatidic acid or LPA) into 1,2-diacyl-sn-glycerol-3-phosphate (phosphatidic acid or PA) by incorporating an acyl moiety at the sn-2 position of the glycerol backbone. Exhibits high acyl-CoA specificity for polyunsaturated fatty acyl-CoA, especially docosahexaenoyl-CoA (22:6-CoA, DHA-CoA). This is 1-acyl-sn-glycerol-3-phosphate acyltransferase delta (Agpat4) from Mus musculus (Mouse).